The chain runs to 308 residues: Aspartate carbamoyltransferase catalytic subunit (308 aa).

Carbamoyl phosphate contacts are provided by arginine 59 and threonine 60. Residue lysine 87 coordinates L-aspartate. Positions 109, 137, and 140 each coordinate carbamoyl phosphate. Arginine 170 and arginine 224 together coordinate L-aspartate. The carbamoyl phosphate site is built by glycine 265 and proline 266.

The protein belongs to the aspartate/ornithine carbamoyltransferase superfamily. ATCase family. In terms of assembly, heterododecamer (2C3:3R2) of six catalytic PyrB chains organized as two trimers (C3), and six regulatory PyrI chains organized as three dimers (R2).

The catalysed reaction is carbamoyl phosphate + L-aspartate = N-carbamoyl-L-aspartate + phosphate + H(+). It functions in the pathway pyrimidine metabolism; UMP biosynthesis via de novo pathway; (S)-dihydroorotate from bicarbonate: step 2/3. Functionally, catalyzes the condensation of carbamoyl phosphate and aspartate to form carbamoyl aspartate and inorganic phosphate, the committed step in the de novo pyrimidine nucleotide biosynthesis pathway. The sequence is that of Aspartate carbamoyltransferase catalytic subunit from Flavobacterium psychrophilum (strain ATCC 49511 / DSM 21280 / CIP 103535 / JIP02/86).